A 198-amino-acid chain; its full sequence is Recombination protein RecR (198 aa).

A C4-type zinc finger spans residues 59-74 (CSLCCNYTDHDPCPIC). In terms of domain architecture, Toprim spans 82–175 (TLLCIVEQPR…KVTRIAHGLP (94 aa)).

This sequence belongs to the RecR family.

Functionally, may play a role in DNA repair. It seems to be involved in an RecBC-independent recombinational process of DNA repair. It may act with RecF and RecO. This is Recombination protein RecR from Desulfitobacterium hafniense (strain DSM 10664 / DCB-2).